We begin with the raw amino-acid sequence, 799 residues long: Valine--tRNA ligase (799 aa).

Lys536 serves as a coordination point for ATP.

It belongs to the class-I aminoacyl-tRNA synthetase family. ValS type 2 subfamily.

It localises to the cytoplasm. The catalysed reaction is tRNA(Val) + L-valine + ATP = L-valyl-tRNA(Val) + AMP + diphosphate. In terms of biological role, catalyzes the attachment of valine to tRNA(Val). As ValRS can inadvertently accommodate and process structurally similar amino acids such as threonine, to avoid such errors, it has a 'posttransfer' editing activity that hydrolyzes mischarged Thr-tRNA(Val) in a tRNA-dependent manner. This chain is Valine--tRNA ligase (valS), found in Pyrobaculum aerophilum (strain ATCC 51768 / DSM 7523 / JCM 9630 / CIP 104966 / NBRC 100827 / IM2).